We begin with the raw amino-acid sequence, 1575 residues long: Mediator of RNA polymerase II transcription subunit 1 (1575 aa).

An interaction with the Mediator complex and THRA region spans residues 1 to 670 (MKAQGETEDS…YGSSPLERQN (670 aa)). Positions 16–590 (MSSLLERLHA…SIKDRHESVG (575 aa)) are interaction with ESR1. Interaction with the Mediator complex regions lie at residues 108-212 (FYVE…GYLT) and 215-390 (SGGH…SLQG). The interaction with THRA stretch occupies residues 405–644 (PLILNMIRHQ…MAGNTKNHPM (240 aa)). Residues 542–789 (PASSPGYGMT…TDILSDIAEE (248 aa)) form an interaction with VDR region. Ser588 is subject to Phosphoserine. The short motif at 604 to 608 (LTSLL) is the LXXLL motif 1 element. Disordered stretches follow at residues 609–706 (QITG…QTED), 737–760 (HITP…SHPQ), 791–818 (SKLP…HSQS), 874–895 (SQSG…NDDF), and 951–1564 (SGSQ…GEED). The segment covering 622 to 632 (PTPPHHTPPPV) has biased composition (pro residues). An interaction with GATA1 region spans residues 622–701 (PTPPHHTPPP…SSRVPPDKPK (80 aa)). The tract at residues 622–701 (PTPPHHTPPP…SSRVPPDKPK (80 aa)) is interaction with PPARGC1A and THRA. An LXXLL motif 2 motif is present at residues 645–649 (LMNLL). Positions 655–675 (QDFSTLYGSSPLERQNSSSGS) are enriched in polar residues. Residues 656–1066 (DFSTLYGSSP…TPPIPKITIQ (411 aa)) form an interaction with ESR1 region. Ser664 carries the post-translational modification Phosphoserine. The segment covering 696-706 (PPDKPKHQTED) has biased composition (basic and acidic residues). Ser795 bears the Phosphoserine mark. At Thr805 the chain carries Phosphothreonine. Polar residues predominate over residues 808 to 818 (RDSSSSGHSQS). The Integrase domain-binding motif (IBM) motif lies at 875–902 (QSGFGEEYFDESSQSGDNDDFKGFASQA). 3 positions are modified to phosphoserine: Ser887, Ser953, and Ser955. Positions 963 to 974 (LGKEKTQKRVKE) are enriched in basic and acidic residues. Positions 976–986 (NGTGASSGSGP) are enriched in gly residues. Thr1032 bears the Phosphothreonine; by MAPK1 or MAPK3 mark. Residues 1034–1051 (PTSTGGSKSPGSSGRSQT) show a composition bias toward low complexity. Phosphothreonine is present on residues Thr1051 and Thr1057. Low complexity-rich tracts occupy residues 1078–1094 (SSHS…SSGS) and 1101–1152 (SSSS…SQTG). Ser1158 carries the phosphoserine modification. Residues 1158–1184 (SPITKHGLSSGSSSTKMKPQGKPSSLM) are compositionally biased toward polar residues. Lys1179 is modified (N6-acetyllysine). A compositionally biased stretch (low complexity) spans 1185–1197 (NPSISKPNISPSH). Position 1209 is a phosphoserine (Ser1209). At Thr1217 the chain carries Phosphothreonine. 2 stretches are compositionally biased toward low complexity: residues 1220–1258 (SSKA…GSVS) and 1265–1295 (SNSC…SKGK). Residue Ser1225 is modified to Phosphoserine. Positions 1251 to 1423 (SASSGSVSQK…KPGESGGDGL (173 aa)) are interaction with TP53. Ser1304 and Ser1349 each carry phosphoserine. Residues 1331–1352 (MGASTNSSNHPMSSKHNTSGGE) show a composition bias toward polar residues. A compositionally biased stretch (basic and acidic residues) spans 1354–1366 (QSKREKSDKDKSK). Phosphoserine occurs at positions 1405 and 1435. 2 stretches are compositionally biased toward polar residues: residues 1427–1442 (IASS…SGST) and 1450–1484 (PSHS…SPSS). The residue at position 1442 (Thr1442) is a Phosphothreonine. Thr1459 bears the Phosphothreonine; by MAPK1 or MAPK3 mark. Phosphoserine occurs at positions 1465, 1467, 1481, 1483, and 1484. The span at 1498 to 1507 (KHKKHKKEKK) shows a compositional bias: basic residues. Lys1523 carries the N6-acetyllysine modification. Residues 1527-1545 (WSKSPISSDPTASVTNNPI) show a composition bias toward polar residues.

Belongs to the Mediator complex subunit 1 family. In terms of assembly, component of the Mediator complex, which is composed of MED1, MED4, MED6, MED7, MED8, MED9, MED10, MED11, MED12, MED13, MED13L, MED14, MED15, MED16, MED17, MED18, MED19, MED20, MED21, MED22, MED23, MED24, MED25, MED26, MED27, MED29, MED30, MED31, CCNC, CDK8 and CDC2L6/CDK11. The MED12, MED13, CCNC and CDK8 subunits form a distinct module termed the CDK8 module. Mediator containing the CDK8 module is less active than Mediator lacking this module in supporting transcriptional activation. Individual preparations of the Mediator complex lacking one or more distinct subunits have been variously termed ARC, CRSP, DRIP, PC2, SMCC and TRAP. This subunit specifically interacts with a number of nuclear receptors in a ligand-dependent fashion including AR, ESR1, ESR2, PPARA, PPARG, RORA, RXRA, RXRG, THRA, THRB and VDR. Interacts with CTNNB1, GABPA, GLI3, PPARGC1A and TP53. Interacts with GATA1 and YWHAH. Interacts with CLOCK; this interaction requires the presence of THRAP3. Interacts with CCAR1. Interacts with NR4A3. Interacts (via IBM motif) with PSIP1 (via IBD domain); phosphorylation increases its affinity for PSIP1. Interacts with USP22. Phosphorylated by MAPK1 or MAPK3 during G2/M phase which may enhance protein stability and promote entry into the nucleolus. Phosphorylation increases its interaction with PSIP1. As to expression, widely expressed in the adult, with high levels of expression in the liver, lung, intestinal mucosa, kidney cortex, thymic cortex, splenic follicle and seminiferous epithelium in testis. Also expressed in the adult heart, brain, spleen and skeletal muscle.

The protein localises to the nucleus. Functionally, component of the Mediator complex, a coactivator involved in the regulated transcription of nearly all RNA polymerase II-dependent genes. Mediator functions as a bridge to convey information from gene-specific regulatory proteins to the basal RNA polymerase II transcription machinery. Mediator is recruited to promoters by direct interactions with regulatory proteins and serves as a scaffold for the assembly of a functional preinitiation complex with RNA polymerase II and the general transcription factors. Essential for embryogenesis, including development of the central nervous system, heart, liver and placenta and for erythropoiesis. Also required for normal transcriptional control of thyroid-stimulating hormone beta (TSHB) in the pituitary. Acts as a coactivator for GATA1-mediated transcriptional activation during erythroid differentiation of K562 erythroleukemia cells. The polypeptide is Mediator of RNA polymerase II transcription subunit 1 (Med1) (Mus musculus (Mouse)).